Consider the following 431-residue polypeptide: Enolase (431 aa).

Residue glutamine 166 coordinates (2R)-2-phosphoglycerate. The Proton donor role is filled by glutamate 208. Mg(2+) is bound by residues aspartate 245, glutamate 288, and aspartate 315. Residues lysine 340, arginine 369, serine 370, and lysine 391 each contribute to the (2R)-2-phosphoglycerate site. Lysine 340 functions as the Proton acceptor in the catalytic mechanism.

It belongs to the enolase family. The cofactor is Mg(2+).

The protein localises to the cytoplasm. It is found in the secreted. It localises to the cell surface. The enzyme catalyses (2R)-2-phosphoglycerate = phosphoenolpyruvate + H2O. It participates in carbohydrate degradation; glycolysis; pyruvate from D-glyceraldehyde 3-phosphate: step 4/5. Catalyzes the reversible conversion of 2-phosphoglycerate (2-PG) into phosphoenolpyruvate (PEP). It is essential for the degradation of carbohydrates via glycolysis. The protein is Enolase of Clostridium botulinum (strain 657 / Type Ba4).